We begin with the raw amino-acid sequence, 526 residues long: ATP synthase subunit alpha (526 aa).

178-185 (GDRQTGKT) contributes to the ATP binding site.

The protein belongs to the ATPase alpha/beta chains family. As to quaternary structure, F-type ATPases have 2 components, CF(1) - the catalytic core - and CF(0) - the membrane proton channel. CF(1) has five subunits: alpha(3), beta(3), gamma(1), delta(1), epsilon(1). CF(0) has four main subunits: a(1), b(1), b'(1) and c(9-12).

The protein resides in the cell membrane. It catalyses the reaction ATP + H2O + 4 H(+)(in) = ADP + phosphate + 5 H(+)(out). Produces ATP from ADP in the presence of a proton gradient across the membrane. The alpha chain is a regulatory subunit. The sequence is that of ATP synthase subunit alpha from Roseiflexus castenholzii (strain DSM 13941 / HLO8).